Consider the following 356-residue polypeptide: Uroporphyrinogen decarboxylase (356 aa).

Substrate-binding positions include 27–31, D77, Y154, T209, and H327; that span reads RQAGR.

It belongs to the uroporphyrinogen decarboxylase family. As to quaternary structure, homodimer.

It localises to the cytoplasm. It carries out the reaction uroporphyrinogen III + 4 H(+) = coproporphyrinogen III + 4 CO2. Its pathway is porphyrin-containing compound metabolism; protoporphyrin-IX biosynthesis; coproporphyrinogen-III from 5-aminolevulinate: step 4/4. Its function is as follows. Catalyzes the decarboxylation of four acetate groups of uroporphyrinogen-III to yield coproporphyrinogen-III. This is Uroporphyrinogen decarboxylase from Cellvibrio japonicus (strain Ueda107) (Pseudomonas fluorescens subsp. cellulosa).